The following is a 519-amino-acid chain: tRNA-2-methylthio-N(6)-dimethylallyladenosine synthase (519 aa).

The disordered stretch occupies residues 1 to 23; it reads MNEQQRKQQSQIRTEQANVDRIK. The segment covering 7 to 17 has biased composition (polar residues); sequence KQQSQIRTEQA. Positions 76–194 constitute an MTTase N-terminal domain; that stretch reads KKFLIRTYGC…LPHLVKEALF (119 aa). 6 residues coordinate [4Fe-4S] cluster: Cys85, Cys121, Cys155, Cys231, Cys235, and Cys238. In terms of domain architecture, Radical SAM core spans 217-450; it reads RKGKIKAWVN…VNKQSAASMK (234 aa). One can recognise a TRAM domain in the interval 450–513; it reads KDYAGKKVKV…TWSLNGVMVE (64 aa).

Belongs to the methylthiotransferase family. MiaB subfamily. In terms of assembly, monomer. It depends on [4Fe-4S] cluster as a cofactor.

The protein resides in the cytoplasm. The enzyme catalyses N(6)-dimethylallyladenosine(37) in tRNA + (sulfur carrier)-SH + AH2 + 2 S-adenosyl-L-methionine = 2-methylsulfanyl-N(6)-dimethylallyladenosine(37) in tRNA + (sulfur carrier)-H + 5'-deoxyadenosine + L-methionine + A + S-adenosyl-L-homocysteine + 2 H(+). Functionally, catalyzes the methylthiolation of N6-(dimethylallyl)adenosine (i(6)A), leading to the formation of 2-methylthio-N6-(dimethylallyl)adenosine (ms(2)i(6)A) at position 37 in tRNAs that read codons beginning with uridine. This is tRNA-2-methylthio-N(6)-dimethylallyladenosine synthase from Oceanobacillus iheyensis (strain DSM 14371 / CIP 107618 / JCM 11309 / KCTC 3954 / HTE831).